A 56-amino-acid polypeptide reads, in one-letter code: Large ribosomal subunit protein bL33 (56 aa).

Belongs to the bacterial ribosomal protein bL33 family.

This chain is Large ribosomal subunit protein bL33, found in Rickettsia bellii (strain OSU 85-389).